A 311-amino-acid polypeptide reads, in one-letter code: Ribosomal protein L11 methyltransferase (311 aa).

Residues Thr-160, Gly-181, Asp-203, and Asn-246 each contribute to the S-adenosyl-L-methionine site.

The protein belongs to the methyltransferase superfamily. PrmA family.

The protein resides in the cytoplasm. It catalyses the reaction L-lysyl-[protein] + 3 S-adenosyl-L-methionine = N(6),N(6),N(6)-trimethyl-L-lysyl-[protein] + 3 S-adenosyl-L-homocysteine + 3 H(+). Methylates ribosomal protein L11. This is Ribosomal protein L11 methyltransferase from Macrococcus caseolyticus (strain JCSC5402) (Macrococcoides caseolyticum).